Reading from the N-terminus, the 433-residue chain is PBSX phage terminase large subunit (433 aa).

To B.subtilis YqaT and phage SPP1 terminase large subunit. Dimer of a small and a large subunit.

Functionally, functions as a terminase. This chain is PBSX phage terminase large subunit (xtmB), found in Bacillus subtilis (strain 168).